The following is a 199-amino-acid chain: 7-methyl-GTP pyrophosphatase (199 aa).

The active-site Proton acceptor is the Asp-76.

Belongs to the Maf family. YceF subfamily. A divalent metal cation serves as cofactor.

The protein localises to the cytoplasm. It catalyses the reaction N(7)-methyl-GTP + H2O = N(7)-methyl-GMP + diphosphate + H(+). Its function is as follows. Nucleoside triphosphate pyrophosphatase that hydrolyzes 7-methyl-GTP (m(7)GTP). May have a dual role in cell division arrest and in preventing the incorporation of modified nucleotides into cellular nucleic acids. The chain is 7-methyl-GTP pyrophosphatase from Rhizobium meliloti (strain 1021) (Ensifer meliloti).